Here is an 83-residue protein sequence, read N- to C-terminus: Small ribosomal subunit protein uS15c (83 aa).

This sequence belongs to the universal ribosomal protein uS15 family. Part of the 30S ribosomal subunit.

The protein localises to the plastid. The protein resides in the chloroplast. In Fagopyrum esculentum subsp. ancestrale (Wild buckwheat), this protein is Small ribosomal subunit protein uS15c (rps15).